Here is a 979-residue protein sequence, read N- to C-terminus: Protocadherin alpha-9 (979 aa).

Positions 1–59 (MRLGNRPEDIRTCVHLRWHIHGLLRQENASVVISKCLRHGAWRLLLWLLLLATWDVGSG) are cleaved as a signal peptide. The Extracellular segment spans residues 60–726 (QLHYSVPEEA…RREASLMDVN (667 aa)). 6 Cadherin domains span residues 64–163 (SVPE…PPIF), 164–272 (SVAE…APVF), 273–380 (DRSV…APEI), 381–485 (VLTS…APAF), 486–595 (AHPE…PPTL), and 611–707 (VSRS…VPKA). N-linked (GlcNAc...) asparagine glycans are attached at residues Asn-287 and Asn-295. Asn-578 is a glycosylation site (N-linked (GlcNAc...) asparagine). Residues 727–747 (VYLIIAICAVSSLLVLTLLLY) form a helical membrane-spanning segment. Topologically, residues 748 to 979 (TALRCSAVPM…GNSTTDNSDQ (232 aa)) are cytoplasmic. PXXP repeat units lie at residues 763-766 (LGKP), 828-831 (PRQP), 861-864 (PGGP), 902-905 (PGNP), and 920-923 (PGSP). The interval 763–923 (LGKPTLVCSS…PDKFIIPGSP (161 aa)) is 5 X 4 AA repeats of P-X-X-P. Positions 859-979 (AGPGGPDQQW…GNSTTDNSDQ (121 aa)) are disordered. The span at 938–952 (DKSDFITFGKKEETK) shows a compositional bias: basic and acidic residues.

Its subcellular location is the cell membrane. Its function is as follows. Potential calcium-dependent cell-adhesion protein. May be involved in the establishment and maintenance of specific neuronal connections in the brain. This Mus musculus (Mouse) protein is Protocadherin alpha-9.